The chain runs to 454 residues: Asparagine--tRNA ligase (454 aa).

This sequence belongs to the class-II aminoacyl-tRNA synthetase family. Homodimer.

It localises to the cytoplasm. The enzyme catalyses tRNA(Asn) + L-asparagine + ATP = L-asparaginyl-tRNA(Asn) + AMP + diphosphate + H(+). This is Asparagine--tRNA ligase from Mesoplasma florum (strain ATCC 33453 / NBRC 100688 / NCTC 11704 / L1) (Acholeplasma florum).